The sequence spans 96 residues: Small ribosomal subunit protein bS18 (96 aa).

It belongs to the bacterial ribosomal protein bS18 family. Part of the 30S ribosomal subunit. Forms a tight heterodimer with protein bS6.

In terms of biological role, binds as a heterodimer with protein bS6 to the central domain of the 16S rRNA, where it helps stabilize the platform of the 30S subunit. In Borrelia garinii subsp. bavariensis (strain ATCC BAA-2496 / DSM 23469 / PBi) (Borreliella bavariensis), this protein is Small ribosomal subunit protein bS18.